Reading from the N-terminus, the 236-residue chain is 2,3,4,5-tetrahydropyridine-2,6-dicarboxylate N-acetyltransferase (236 aa).

It belongs to the transferase hexapeptide repeat family. DapH subfamily.

It catalyses the reaction (S)-2,3,4,5-tetrahydrodipicolinate + acetyl-CoA + H2O = L-2-acetamido-6-oxoheptanedioate + CoA. It participates in amino-acid biosynthesis; L-lysine biosynthesis via DAP pathway; LL-2,6-diaminopimelate from (S)-tetrahydrodipicolinate (acetylase route): step 1/3. In terms of biological role, catalyzes the transfer of an acetyl group from acetyl-CoA to tetrahydrodipicolinate. In Clostridium botulinum (strain Alaska E43 / Type E3), this protein is 2,3,4,5-tetrahydropyridine-2,6-dicarboxylate N-acetyltransferase.